A 152-amino-acid polypeptide reads, in one-letter code: Aspartate carbamoyltransferase regulatory chain (152 aa).

Residues Cys-108, Cys-113, Cys-137, and Cys-140 each contribute to the Zn(2+) site.

This sequence belongs to the PyrI family. Contains catalytic and regulatory chains. Zn(2+) serves as cofactor.

Its function is as follows. Involved in allosteric regulation of aspartate carbamoyltransferase. The sequence is that of Aspartate carbamoyltransferase regulatory chain from Neisseria gonorrhoeae (strain ATCC 700825 / FA 1090).